The following is a 78-amino-acid chain: Esculentin-2ISa (78 aa).

A signal peptide spans methionine 1 to cysteine 22. A propeptide spans lysine 23 to valine 39 (removed in mature form). Cysteine 72 and cysteine 78 are disulfide-bonded.

In terms of tissue distribution, expressed by the skin glands.

Its subcellular location is the secreted. Has antimicrobial activity against Gram-negative bacterium E.coli ATCC 8739 (MIC=12.5 ug), against Gram positive bacteria S.aureus ATCC 6538 (MIC=3.1 ug), methicillin-resistant S.aureus ATCC 43300 (MIC=25 ug), B.subtilis ATCC 6633 (MIC=6.3 ug) and against fungus C.albicans ATCC 90028 (MIC=100 ug). The chain is Esculentin-2ISa from Odorrana ishikawae (Ishikawa's frog).